A 130-amino-acid polypeptide reads, in one-letter code: MAEQRFYATGKRKTSIARVWLKPGEGNITVNRRTLDEYFGRETSKMVIRQPLELTDNMGKFDIMVNVCGGGPSGQAGAIKHGITKALLEADPELRGVLKKAGFITRDSRAKERKKYGRKGARARFQFSKR.

The interval 110 to 130 is disordered; that stretch reads AKERKKYGRKGARARFQFSKR. Basic residues predominate over residues 111–130; sequence KERKKYGRKGARARFQFSKR.

It belongs to the universal ribosomal protein uS9 family.

This chain is Small ribosomal subunit protein uS9, found in Syntrophotalea carbinolica (strain DSM 2380 / NBRC 103641 / GraBd1) (Pelobacter carbinolicus).